Here is a 1117-residue protein sequence, read N- to C-terminus: Zinc finger E-box-binding homeobox 1 (1117 aa).

Disordered regions lie at residues 1 to 103 (MADG…QNHD) and 122 to 143 (APEEDQRQGTPEASSHDENGTP). Residues 15-30 (PRRNNVTNYNTVVEAN) are compositionally biased toward low complexity. Phosphoserine occurs at positions 31 and 33. The C2H2-type 1 zinc-finger motif lies at 150–173 (LTCPYCDRGYKRFTSLKEHIKYRH). Glycyl lysine isopeptide (Lys-Gly) (interchain with G-Cter in SUMO2) cross-links involve residues Lys-166 and Lys-175. 2 consecutive C2H2-type zinc fingers follow at residues 180 to 202 (FSCSLCSYTFAYRTQLERHMTSH) and 220 to 242 (FKCTECGKAFKYKHHLKEHLRIH). Residues 248 to 272 (YECPNCKKRFSHSGSYSSHISSKKC) form a C2H2-type 4; atypical zinc finger. The interval 278-307 (VNGRPRSGLKTSQCSSPSLSTSPGSPTRPQ) is disordered. Residue Lys-287 forms a Glycyl lysine isopeptide (Lys-Gly) (interchain with G-Cter in SUMO2) linkage. Positions 288–304 (TSQCSSPSLSTSPGSPT) are enriched in low complexity. Phosphoserine occurs at positions 293 and 302. Residues Lys-311 and Lys-315 each participate in a glycyl lysine isopeptide (Lys-Gly) (interchain with G-Cter in SUMO2) cross-link. Lys-327 participates in a covalent cross-link: Glycyl lysine isopeptide (Lys-Gly) (interchain with G-Cter in SUMO); alternate. Lys-327 participates in a covalent cross-link: Glycyl lysine isopeptide (Lys-Gly) (interchain with G-Cter in SUMO2); alternate. Glycyl lysine isopeptide (Lys-Gly) (interchain with G-Cter in SUMO2) cross-links involve residues Lys-419, Lys-473, Lys-484, Lys-495, and Lys-528. Disordered regions lie at residues 476-501 (IPAPTNSCKSEKLPEDLTVKSETDKS), 528-566 (KHYDPECPAQPPPPAPATEKPESSASSAGNGDLSPSQPP), and 613-687 (GQIP…SPLN). The segment covering 484–501 (KSEKLPEDLTVKSETDKS) has biased composition (basic and acidic residues). A DNA-binding region (homeobox; atypical) is located at residues 559 to 618 (DLSPSQPPLKNLLSLLKAYYALNAQPSTEELSKIADSVNLPLDGVKKWFEKMQAGQIPGQ). Phosphoserine occurs at positions 657, 664, 671, and 678. Positions 673-687 (MNGSRSCTSSPSPLN) are enriched in polar residues. The residue at position 680 (Thr-680) is a Phosphothreonine. Position 682 is a phosphoserine (Ser-682). Residue Lys-752 forms a Glycyl lysine isopeptide (Lys-Gly) (interchain with G-Cter in SUMO); alternate linkage. Lys-752 is covalently cross-linked (Glycyl lysine isopeptide (Lys-Gly) (interchain with G-Cter in SUMO2); alternate). Residues 834 to 876 (PPVKVIQPNGNQDERQDTSSEGVSTVEDQNDSDSTPPKKKTRK) are disordered. The span at 852–868 (SSEGVSTVEDQNDSDST) shows a compositional bias: polar residues. C2H2-type zinc fingers lie at residues 882–904 (YACDLCDKIFQKSSSLLRHKYEH) and 910–932 (HECGICRKAFKHKHHLIEHMRLH). The C2H2-type 7; atypical zinc finger occupies 938–959 (YQCDKCGKRFSHSGSYSQHMNH). Residues 991–1117 (EHVGARASPS…QLSEEKTNEA (127 aa)) form a disordered region. 3 stretches are compositionally biased toward acidic residues: residues 1013–1032 (EEDEDSEKEEEEEDKEMEEL), 1042–1069 (QGEEEEEEEEEEEEEEEEEEEVEADEAE), and 1098–1109 (SEMESESESEQL).

Belongs to the delta-EF1/ZFH-1 C2H2-type zinc-finger family. In terms of assembly, interacts (via N-terminus) with SMARCA4/BRG1. Ubiquitinated, leading to degradation in a proteasome-dependent manner. Deubiquitinated by USP51, leading to stabilization. Expressed in the external germinal layer (EGL) and internal granular layer (IGL) of the cerebellum (at protein level).

The protein resides in the nucleus. Its function is as follows. Acts as a transcriptional repressor. Binds to E-box sequences in the immunoglobulin heavy chain enhancer as well as in the regulatory regions of many other tissue-specific genes. Represses E-cadherin promoter and induces an epithelial-mesenchymal transition (EMT) by recruiting SMARCA4/BRG1. Represses BCL6 transcription in the presence of the corepressor CTBP1. Positively regulates neuronal differentiation. Represses RCOR1 transcription activation during neurogenesis. Represses transcription by binding to the E box (5'-CANNTG-3'). In the absence of TGFB1, acts as a repressor of COL1A2 transcription via binding to the E-box in the upstream enhancer region. Promotes tumorigenicity by repressing stemness-inhibiting microRNAs. This chain is Zinc finger E-box-binding homeobox 1, found in Mus musculus (Mouse).